Here is an 811-residue protein sequence, read N- to C-terminus: Glycerol-3-phosphate acyltransferase (811 aa).

Residues 303-308 (CHRSHM) carry the HXXXXD motif motif.

Belongs to the GPAT/DAPAT family.

It is found in the cell inner membrane. The enzyme catalyses sn-glycerol 3-phosphate + an acyl-CoA = a 1-acyl-sn-glycero-3-phosphate + CoA. It participates in phospholipid metabolism; CDP-diacylglycerol biosynthesis; CDP-diacylglycerol from sn-glycerol 3-phosphate: step 1/3. The chain is Glycerol-3-phosphate acyltransferase from Glaesserella parasuis serovar 5 (strain SH0165) (Haemophilus parasuis).